A 651-amino-acid chain; its full sequence is Beta-mannosyltransferase 7 (651 aa).

Residues 1–19 (MKLEMSSYLHKVPNTGITN) lie on the Cytoplasmic side of the membrane. Residues 20-42 (LSNSKSIVFIMFCATLLFIITSS) form a helical membrane-spanning segment. Topologically, residues 43–651 (RYLTGSESLG…VKIDEKSEET (609 aa)) are extracellular. 2 N-linked (GlcNAc...) asparagine glycosylation sites follow: N271 and N423.

This sequence belongs to the BMT family.

The protein resides in the membrane. Functionally, beta-mannosyltransferase involved in cell wall biosynthesis through beta-1,2-mannosylation of cell wall phosphopeptidomannan. This is Beta-mannosyltransferase 7 (BMT7) from Candida albicans (strain SC5314 / ATCC MYA-2876) (Yeast).